Here is an 80-residue protein sequence, read N- to C-terminus: Lantibiotic Flvalpha.c (80 aa).

The propeptide at Met1 to Ala38 is cleaved by FlvT. 2,3-didehydrobutyrine; by FlvM1 occurs at positions 43 and 47. The beta-methyllanthionine (Thr-Cys); by FlvM1 cross-link spans Thr52–Cys55. Residues Ser58–Cys68 constitute a cross-link (lanthionine (Ser-Cys); by FlvM1). Cross-links (beta-methyllanthionine (Thr-Cys); by FlvM1) lie at residues Thr69–Cys74 and Thr71–Cys78.

In terms of processing, the lanthionine formed by Ser-58 and Cys-68 forms a putative lipid II binding motif. Post-translationally, maturation of FlvA1 peptides involves the enzymatic conversion of Thr, and Ser into dehydrated AA and the formation of thioether bonds with cysteines. Modifications are processed by the flavecin synthetase FlvM1. This is followed by membrane translocation and cleavage of the modified precursor. Contains DL-lanthionine and DL-beta-methyllanthionine, when coepressed in E.coli with the flavecin synthetase FlvM1.

Its subcellular location is the secreted. Functionally, lanthionine-containing peptide antibiotic (lantibiotic) only active on Gram-positive bacteria in synergy with Flvbeta peptides, which are encoded by the same operon than Flvalpha.a. Shows antibacterial activity in synergy with Flvbeta.b, Flvbeta.c, Flvbeta.e and Flvbeta.g. Does not show antibacterial activity when tested with Flvbeta.a, Flvbeta.d, Flvbeta.f and Flvbeta.h. The bactericidal activity of lantibiotics is based on depolarization of energized bacterial cytoplasmic membranes, initiated by the formation of aqueous transmembrane pores. This chain is Lantibiotic Flvalpha.c, found in Ruminococcus flavefaciens.